Consider the following 269-residue polypeptide: MHIILTGTGLVGAIALDAMLQESSIDKITIISRKPVPQAEGQSKVEVIIQEDLSTYSDETLAKLKGAHGCIWTAGPPLMAVTRQEYEYGHIDLPVKAAKAFAALNDKFNFVYVSHDGCHDTRAVYIFDVKARAEEKLFQLHHDPSKRLEIKTKGGIEEQESLSSFVLYCIRPALIDYSTHDAIKPWLKPLPLAKKWTNGVILPLYRFLGLTSIMGTSQELGQAMKDLVISDGRDVDVAGASPEGRCLGAVGMRNWTQARNESPEDTVAV.

An N-terminal signal peptide occupies residues 1–15 (MHIILTGTGLVGAIA). An N-linked (GlcNAc...) asparagine glycan is attached at asparagine 254.

Its function is as follows. Part of the gene cluster that mediates the biosynthesis of the lipopeptide antibiotics leucinostatins that show extensive biological activities, including antimalarial, antiviral, antibacterial, antifungal, and antitumor activities, as well as phytotoxic. The function of lcsT within the leucinostatins biosynthesis has not been identified yet. This Purpureocillium lilacinum (Paecilomyces lilacinus) protein is Leucinostatins biosynthesis cluster protein T.